A 589-amino-acid chain; its full sequence is Aspartate--tRNA ligase (589 aa).

Glutamate 175 contacts L-aspartate. Residues 199 to 202 (QLFK) form an aspartate region. Arginine 221 contributes to the L-aspartate binding site. Residues 221-223 (RDE) and glutamine 230 contribute to the ATP site. Residue histidine 449 coordinates L-aspartate. Glutamate 483 is an ATP binding site. Arginine 490 provides a ligand contact to L-aspartate. Position 535-538 (535-538 (GLDR)) interacts with ATP.

The protein belongs to the class-II aminoacyl-tRNA synthetase family. Type 1 subfamily. In terms of assembly, homodimer.

It is found in the cytoplasm. It carries out the reaction tRNA(Asp) + L-aspartate + ATP = L-aspartyl-tRNA(Asp) + AMP + diphosphate. In terms of biological role, catalyzes the attachment of L-aspartate to tRNA(Asp) in a two-step reaction: L-aspartate is first activated by ATP to form Asp-AMP and then transferred to the acceptor end of tRNA(Asp). The polypeptide is Aspartate--tRNA ligase (Lysinibacillus sphaericus (strain C3-41)).